We begin with the raw amino-acid sequence, 405 residues long: uncharacterized protein (405 aa).

12 consecutive transmembrane segments (helical) span residues 19–39, 47–67, 85–105, 129–149, 157–177, 178–198, 224–244, 252–272, 283–303, 309–329, 344–364, and 366–386; these read ILSIVMFNFASYLTIGLPLAV, VMGFSAFWAGLVISLQYFATL, IVVFGLCGCFLSGLGYLTAGL, SFAGTGSTLWGVGVVGSLHIG, IVTYGAMAMGAPLGVVFYHWG, GLQALALIIMGVALVAILLAI, GMALALASAGFGVIATFITLF, GAAFALTLFSCAFVGTRLLFP, VAMICFSVEIIGLLLVGVATM, IGVLLAGAGFSLVFPALGVVA, TYTVFMDLSLGVTGPLAGLVM, and WAGVPVIYLAAAGLVAIALLL.

The protein belongs to the major facilitator superfamily. YhhS family.

Its subcellular location is the cell inner membrane. This is an uncharacterized protein from Escherichia coli O157:H7.